The sequence spans 99 residues: DNA-directed RNA polymerase subunit omega (99 aa).

This sequence belongs to the RNA polymerase subunit omega family. The RNAP catalytic core consists of 2 alpha, 1 beta, 1 beta' and 1 omega subunit. When a sigma factor is associated with the core the holoenzyme is formed, which can initiate transcription.

The enzyme catalyses RNA(n) + a ribonucleoside 5'-triphosphate = RNA(n+1) + diphosphate. In terms of biological role, promotes RNA polymerase assembly. Latches the N- and C-terminal regions of the beta' subunit thereby facilitating its interaction with the beta and alpha subunits. This is DNA-directed RNA polymerase subunit omega from Deinococcus deserti (strain DSM 17065 / CIP 109153 / LMG 22923 / VCD115).